A 95-amino-acid polypeptide reads, in one-letter code: Large ribosomal subunit protein bL25 (95 aa).

Positions M1–R20 are disordered.

It belongs to the bacterial ribosomal protein bL25 family. Part of the 50S ribosomal subunit; part of the 5S rRNA/L5/L18/L25 subcomplex. Contacts the 5S rRNA. Binds to the 5S rRNA independently of L5 and L18.

In terms of biological role, this is one of the proteins that binds to the 5S RNA in the ribosome where it forms part of the central protuberance. This chain is Large ribosomal subunit protein bL25, found in Histophilus somni (strain 129Pt) (Haemophilus somnus).